Consider the following 354-residue polypeptide: UDP-3-O-acylglucosamine N-acyltransferase (354 aa).

His-258 functions as the Proton acceptor in the catalytic mechanism.

Belongs to the transferase hexapeptide repeat family. LpxD subfamily. In terms of assembly, homotrimer.

The catalysed reaction is a UDP-3-O-[(3R)-3-hydroxyacyl]-alpha-D-glucosamine + a (3R)-hydroxyacyl-[ACP] = a UDP-2-N,3-O-bis[(3R)-3-hydroxyacyl]-alpha-D-glucosamine + holo-[ACP] + H(+). The protein operates within bacterial outer membrane biogenesis; LPS lipid A biosynthesis. Catalyzes the N-acylation of UDP-3-O-acylglucosamine using 3-hydroxyacyl-ACP as the acyl donor. Is involved in the biosynthesis of lipid A, a phosphorylated glycolipid that anchors the lipopolysaccharide to the outer membrane of the cell. The chain is UDP-3-O-acylglucosamine N-acyltransferase from Sinorhizobium fredii (strain NBRC 101917 / NGR234).